Consider the following 473-residue polypeptide: Photosystem II CP43 reaction center protein (473 aa).

Positions 1–14 are excised as a propeptide; that stretch reads MKTLYSLRRFYPVE. Thr15 carries the N-acetylthreonine modification. The residue at position 15 (Thr15) is a Phosphothreonine. Transmembrane regions (helical) follow at residues 69–93, 134–155, 178–200, 255–275, and 291–312; these read LFEV…PHLA, LLGP…KDRN, KALY…RKIT, KPFA…LSYS, and WFNN…ASQA. Position 367 (Glu367) interacts with [CaMn4O5] cluster. A helical transmembrane segment spans residues 447–471; sequence RARAAAAGFEKGIDRDLEPVLSMTP.

This sequence belongs to the PsbB/PsbC family. PsbC subfamily. As to quaternary structure, PSII is composed of 1 copy each of membrane proteins PsbA, PsbB, PsbC, PsbD, PsbE, PsbF, PsbH, PsbI, PsbJ, PsbK, PsbL, PsbM, PsbT, PsbX, PsbY, PsbZ, Psb30/Ycf12, at least 3 peripheral proteins of the oxygen-evolving complex and a large number of cofactors. It forms dimeric complexes. It depends on Binds multiple chlorophylls and provides some of the ligands for the Ca-4Mn-5O cluster of the oxygen-evolving complex. It may also provide a ligand for a Cl- that is required for oxygen evolution. PSII binds additional chlorophylls, carotenoids and specific lipids. as a cofactor.

The protein localises to the plastid. It is found in the chloroplast thylakoid membrane. One of the components of the core complex of photosystem II (PSII). It binds chlorophyll and helps catalyze the primary light-induced photochemical processes of PSII. PSII is a light-driven water:plastoquinone oxidoreductase, using light energy to abstract electrons from H(2)O, generating O(2) and a proton gradient subsequently used for ATP formation. The polypeptide is Photosystem II CP43 reaction center protein (Phalaenopsis aphrodite subsp. formosana (Moth orchid)).